The following is a 476-amino-acid chain: Adenosylhomocysteinase (476 aa).

The substrate site is built by Thr67, Asp142, and Glu202. 203-205 serves as a coordination point for NAD(+); the sequence is TTT. Substrate-binding residues include Lys232 and Asp236. NAD(+)-binding positions include Asn237, 266–271, Glu289, Asn324, 345–347, and Asn390; these read GYGDVG and IGH.

Belongs to the adenosylhomocysteinase family. The cofactor is NAD(+).

The protein localises to the cytoplasm. It carries out the reaction S-adenosyl-L-homocysteine + H2O = L-homocysteine + adenosine. The protein operates within amino-acid biosynthesis; L-homocysteine biosynthesis; L-homocysteine from S-adenosyl-L-homocysteine: step 1/1. Its function is as follows. May play a key role in the regulation of the intracellular concentration of adenosylhomocysteine. In Prochlorococcus marinus (strain SARG / CCMP1375 / SS120), this protein is Adenosylhomocysteinase.